Here is a 234-residue protein sequence, read N- to C-terminus: Small ribosomal subunit protein uS3 (234 aa).

The KH type-2 domain occupies valine 39–arginine 107. A disordered region spans residues glutamate 212–serine 234.

This sequence belongs to the universal ribosomal protein uS3 family. Part of the 30S ribosomal subunit. Forms a tight complex with proteins S10 and S14.

Functionally, binds the lower part of the 30S subunit head. Binds mRNA in the 70S ribosome, positioning it for translation. This Thiobacillus denitrificans (strain ATCC 25259 / T1) protein is Small ribosomal subunit protein uS3.